The primary structure comprises 323 residues: Formyltetrahydrofolate deformylase 1, mitochondrial (323 aa).

A mitochondrion-targeting transit peptide spans 1-25; that stretch reads MIRRITERASGFAKNIPILKSSRFH. Residues 41–124 form the ACT domain; it reads VHVFHCQDAV…SVVRVPSIDP (84 aa). Residue Asp267 is part of the active site.

The protein belongs to the PurU family. Expressed in leaves, cotyledons, roots, seeds and flowers.

It is found in the mitochondrion. It carries out the reaction (6R)-10-formyltetrahydrofolate + H2O = (6S)-5,6,7,8-tetrahydrofolate + formate + H(+). Deformylase involved in photorespiration. Prevents excessive accumulation of 5-formyl tetrahydrofolate (THF), a potent inhibitor of the Gly decarboxylase/Ser hydroxymethyltransferase complex. The sequence is that of Formyltetrahydrofolate deformylase 1, mitochondrial (PURU1) from Arabidopsis thaliana (Mouse-ear cress).